A 207-amino-acid chain; its full sequence is Large ribosomal subunit protein uL4 (207 aa).

Positions 44–77 (LRQGTHKTKGRSEVRGGGRKPWRQKGTGRARQGS) are disordered. Positions 60–71 (GGRKPWRQKGTG) are enriched in basic residues.

It belongs to the universal ribosomal protein uL4 family. In terms of assembly, part of the 50S ribosomal subunit.

Functionally, one of the primary rRNA binding proteins, this protein initially binds near the 5'-end of the 23S rRNA. It is important during the early stages of 50S assembly. It makes multiple contacts with different domains of the 23S rRNA in the assembled 50S subunit and ribosome. In terms of biological role, forms part of the polypeptide exit tunnel. This Shouchella clausii (strain KSM-K16) (Alkalihalobacillus clausii) protein is Large ribosomal subunit protein uL4.